We begin with the raw amino-acid sequence, 629 residues long: tRNA uridine 5-carboxymethylaminomethyl modification enzyme MnmG (629 aa).

Residues 13–18, Val-125, and Ser-180 each bind FAD; that span reads GGGHAG. 273 to 287 is a binding site for NAD(+); the sequence is GPRYCPSIEDKVMRF. Position 370 (Gln-370) interacts with FAD.

This sequence belongs to the MnmG family. In terms of assembly, homodimer. Heterotetramer of two MnmE and two MnmG subunits. It depends on FAD as a cofactor.

The protein localises to the cytoplasm. Functionally, NAD-binding protein involved in the addition of a carboxymethylaminomethyl (cmnm) group at the wobble position (U34) of certain tRNAs, forming tRNA-cmnm(5)s(2)U34. This Shigella flexneri serotype 5b (strain 8401) protein is tRNA uridine 5-carboxymethylaminomethyl modification enzyme MnmG.